Consider the following 494-residue polypeptide: Serine carboxypeptidase-like 21 (494 aa).

An N-terminal signal peptide occupies residues 1–23 (MGRLVEAIIASILLSLCFTITKS). Asn37 and Asn69 each carry an N-linked (GlcNAc...) asparagine glycan. 3 disulfide bridges follow: Cys85–Cys383, Cys247–Cys263, and Cys286–Cys350. Ser179 is an active-site residue. Asn198 and Asn248 each carry an N-linked (GlcNAc...) asparagine glycan. Asn402 carries N-linked (GlcNAc...) asparagine glycosylation. The active site involves Asp418. A glycan (N-linked (GlcNAc...) asparagine) is linked at Asn460. The active site involves His471.

This sequence belongs to the peptidase S10 family. In terms of tissue distribution, expressed in flowers and siliques.

It is found in the secreted. In terms of biological role, probable carboxypeptidase. This is Serine carboxypeptidase-like 21 (SCPL21) from Arabidopsis thaliana (Mouse-ear cress).